The chain runs to 227 residues: Flagellar L-ring protein 2 (227 aa).

The N-terminal stretch at 1–17 (MKSKLAITMVSALLLAA) is a signal peptide. A lipid anchor (N-palmitoyl cysteine) is attached at Cys18. A lipid anchor (S-diacylglycerol cysteine) is attached at Cys18.

The protein belongs to the FlgH family. As to quaternary structure, the basal body constitutes a major portion of the flagellar organelle and consists of four rings (L,P,S, and M) mounted on a central rod.

It localises to the cell outer membrane. The protein localises to the bacterial flagellum basal body. Functionally, assembles around the rod to form the L-ring and probably protects the motor/basal body from shearing forces during rotation. This chain is Flagellar L-ring protein 2, found in Chromobacterium violaceum (strain ATCC 12472 / DSM 30191 / JCM 1249 / CCUG 213 / NBRC 12614 / NCIMB 9131 / NCTC 9757 / MK).